Consider the following 773-residue polypeptide: Tyrosine kinase receptor Cad96Ca (773 aa).

Positions 1–48 (MVYHHHNHESRIIHCRKQLTSWRRRSLLLTIIVVTATVVSLISQEAEA) are cleaved as a signal peptide. At 49–315 (HNQNAPPILY…ITIFSLKSGT (267 aa)) the chain is on the extracellular side. Residues 58–172 (YVRERNWRIS…ENSSGYRPQT (115 aa)) form the Cadherin domain. N-linked (GlcNAc...) asparagine glycans are attached at residues N126, N164, and N180. A disordered region spans residues 196–302 (SIRNGLPNSR…TPSGGHHNNS (107 aa)). Pro residues predominate over residues 209-235 (WYPPVPQNNIFGPPPFGNNYPPPPPNI). Positions 243–253 (SGEEEQPDEEV) are enriched in acidic residues. 2 stretches are compositionally biased toward polar residues: residues 254–283 (TPTT…STRV) and 290–302 (ETTT…HNNS). N-linked (GlcNAc...) asparagine glycosylation is found at N278, N279, N300, and N301. The helical transmembrane segment at 316 to 336 (IPIVVTVGGFFVAIAVLLAYL) threads the bilayer. The Cytoplasmic segment spans residues 337-773 (CRRRLCAISR…NIVSLSGEKL (437 aa)). Disordered regions lie at residues 352 to 373 (KEKE…LTDD) and 411 to 447 (TGVT…AGSS). Positions 361–373 (SNQSQLSSTLTDD) are enriched in polar residues. A compositionally biased stretch (low complexity) spans 411 to 433 (TGVTNGGVSSPGVPSPGTGEPGS). The region spanning 470–749 (LKFFNILGEG…MLDKLLHTEM (280 aa)) is the Protein kinase domain. ATP is bound by residues 476–484 (LGEGAFGQV) and K504. D610 (proton acceptor) is an active-site residue.

It belongs to the protein kinase superfamily. Tyr protein kinase family. Fibroblast growth factor receptor subfamily.

The protein resides in the membrane. It catalyses the reaction L-tyrosyl-[protein] + ATP = O-phospho-L-tyrosyl-[protein] + ADP + H(+). This Drosophila melanogaster (Fruit fly) protein is Tyrosine kinase receptor Cad96Ca (Cad96Ca).